A 233-amino-acid polypeptide reads, in one-letter code: Large ribosomal subunit protein uL1 (233 aa).

It belongs to the universal ribosomal protein uL1 family. Part of the 50S ribosomal subunit.

Binds directly to 23S rRNA. The L1 stalk is quite mobile in the ribosome, and is involved in E site tRNA release. In terms of biological role, protein L1 is also a translational repressor protein, it controls the translation of the L11 operon by binding to its mRNA. This chain is Large ribosomal subunit protein uL1, found in Deinococcus geothermalis (strain DSM 11300 / CIP 105573 / AG-3a).